The primary structure comprises 258 residues: Synaptosomal-associated protein 29 (258 aa).

The disordered stretch occupies residues 1–41 (MSAYPKSYNPFDDDGEDEGARPAPWRDARDLPDGPDAPADR). The span at 18 to 32 (EGARPAPWRDARDLP) shows a compositional bias: basic and acidic residues. Residues 76–107 (ASSEELARQRGVLERTEKMVDKMDQDLKISQK) are a coiled coil. Ser-77, Ser-78, and Ser-114 each carry phosphoserine. Residues Thr-130 and Thr-137 each carry the phosphothreonine modification. The segment at 150–191 (ISTSKEQEAKYQASHPNLRKLDDTDPVPRGAGSAMSTDAYPK) is disordered. Residues Ser-163, Ser-182, Ser-185, Ser-204, and Ser-210 each carry the phosphoserine modification. The region spanning 196–258 (RAYHQKIDSN…KSTERKVRQL (63 aa)) is the t-SNARE coiled-coil homology domain.

Belongs to the SNAP-25 family. Forms a SNARE complex, composed of VAMP8, SNAP29 and STX17, involved in fusion of autophagosome with lysosome. Interacts with multiple syntaxins including STX6. Interacts with EIPR1. Interacts with STX17; this interaction is increased in the absence of TMEM39A. In terms of assembly, (Microbial infection) Interacts with Hantaan hantavirus nucleoprotein; this interaction prevents the breakdown of the viral glycoprotein N by virus-triggered autophagy. As to quaternary structure, (Microbial infection) The interaction with STX17 is decreased in presence of SARS coronavirus-2/SARS-CoV-2 ORF3A protein. As to expression, found in brain, heart, kidney, liver, lung, placenta, skeletal muscle, spleen and pancreas.

The protein resides in the cytoplasm. Its subcellular location is the golgi apparatus membrane. The protein localises to the cytoplasmic vesicle. It is found in the autophagosome membrane. It localises to the cell projection. The protein resides in the cilium membrane. Functionally, SNAREs, soluble N-ethylmaleimide-sensitive factor-attachment protein receptors, are essential proteins for fusion of cellular membranes. SNAREs localized on opposing membranes assemble to form a trans-SNARE complex, an extended, parallel four alpha-helical bundle that drives membrane fusion. SNAP29 is a SNARE involved in autophagy through the direct control of autophagosome membrane fusion with the lysososome membrane. Also plays a role in ciliogenesis by regulating membrane fusions. The polypeptide is Synaptosomal-associated protein 29 (Homo sapiens (Human)).